Here is a 559-residue protein sequence, read N- to C-terminus: Potassium-transporting ATPase potassium-binding subunit (559 aa).

Helical transmembrane passes span 5–25 (GFLLIASFLLILLVLAKPLGS), 27–47 (LARLIAAVPLPGVAGIERILW), 63–83 (LLALLTLNLLGLGILFCLLFW), 132–152 (GLTVQNFLSAATGIAVVFALI), 170–190 (LVRITLWILFPVALIIALFFI), 253–273 (LAQMLAIFLIPAALCFAFGEA), 283–303 (LLWAMSFIFVVCVAVVMWAEV), 327–347 (FGVLASSLFAVVTTAASCGAV), 356–376 (ALGGMVPMWLMQIGEVVFGGV), 379–399 (GLYGMLLFVLLAVFIAGLMIG), 416–436 (MTALAILVTPMLVLLGSALAM), 484–504 (LLAFCMFVGRFGVIIPVMAIA), and 524–544 (GALFIGLLIGTVLLVGALTFI).

It belongs to the KdpA family. As to quaternary structure, the system is composed of three essential subunits: KdpA, KdpB and KdpC.

It is found in the cell inner membrane. Functionally, part of the high-affinity ATP-driven potassium transport (or Kdp) system, which catalyzes the hydrolysis of ATP coupled with the electrogenic transport of potassium into the cytoplasm. This subunit binds the periplasmic potassium ions and delivers the ions to the membrane domain of KdpB through an intramembrane tunnel. The sequence is that of Potassium-transporting ATPase potassium-binding subunit from Salmonella heidelberg (strain SL476).